Reading from the N-terminus, the 238-residue chain is Protein E6 (238 aa).

Basic and acidic residues predominate over residues 40–51; it reads KETTTREQKHET. 2 disordered regions span residues 40–64 and 210–238; these read KETT…EEQE and EFNE…EFEP. The segment covering 227–238 has biased composition (acidic residues); sequence EEFEESEEEFEP.

In terms of tissue distribution, it is predominantly expressed in fiber cells.

It localises to the secreted. It is found in the cell wall. This chain is Protein E6 (E6), found in Gossypium hirsutum (Upland cotton).